The following is a 363-amino-acid chain: Elongation factor Tu, chloroplastic (363 aa).

A tr-type G domain is found at Thr-1–Glu-189. Residues Asp-55–His-59 and Asn-110–Asp-113 each bind GTP.

This sequence belongs to the TRAFAC class translation factor GTPase superfamily. Classic translation factor GTPase family. EF-Tu/EF-1A subfamily.

It is found in the plastid. It localises to the chloroplast. The catalysed reaction is GTP + H2O = GDP + phosphate + H(+). In terms of biological role, GTP hydrolase that promotes the GTP-dependent binding of aminoacyl-tRNA to the A-site of ribosomes during protein biosynthesis. This Gymnochlora stellata protein is Elongation factor Tu, chloroplastic (tufA).